The sequence spans 276 residues: Large ribosomal subunit protein uL2 (276 aa).

The tract at residues T219 to K268 is disordered.

This sequence belongs to the universal ribosomal protein uL2 family. As to quaternary structure, part of the 50S ribosomal subunit. Forms a bridge to the 30S subunit in the 70S ribosome.

Its function is as follows. One of the primary rRNA binding proteins. Required for association of the 30S and 50S subunits to form the 70S ribosome, for tRNA binding and peptide bond formation. It has been suggested to have peptidyltransferase activity; this is somewhat controversial. Makes several contacts with the 16S rRNA in the 70S ribosome. In Lactococcus lactis subsp. lactis (strain IL1403) (Streptococcus lactis), this protein is Large ribosomal subunit protein uL2.